Reading from the N-terminus, the 181-residue chain is Small ribosomal subunit protein uS4 (181 aa).

An S4 RNA-binding domain is found at 106–168 (RRLQTLVYRK…PTSRIVKAKV (63 aa)).

The protein belongs to the universal ribosomal protein uS4 family. In terms of assembly, part of the 30S ribosomal subunit. Contacts protein S5. The interaction surface between S4 and S5 is involved in control of translational fidelity.

In terms of biological role, one of the primary rRNA binding proteins, it binds directly to 16S rRNA where it nucleates assembly of the body of the 30S subunit. Functionally, with S5 and S12 plays an important role in translational accuracy. The chain is Small ribosomal subunit protein uS4 from Caldivirga maquilingensis (strain ATCC 700844 / DSM 13496 / JCM 10307 / IC-167).